The sequence spans 923 residues: Lysosomal acid alpha-glucosidase (923 aa).

The N-terminal stretch at methionine 1 to alanine 17 is a signal peptide. Residues glycine 18–glutamine 36 constitute a propeptide that is removed on maturation. Residues asparagine 65, asparagine 405, and asparagine 440 are each glycosylated (N-linked (GlcNAc...) asparagine). Aspartate 455 functions as the Nucleophile in the catalytic mechanism. Glutamate 458 is an active-site residue. Aspartate 585 (proton donor) is an active-site residue. N-linked (GlcNAc...) asparagine glycosylation is found at asparagine 586, asparagine 621, asparagine 646, asparagine 848, asparagine 908, and asparagine 912.

It belongs to the glycosyl hydrolase 31 family.

It is found in the lysosome. Its subcellular location is the secreted. The enzyme catalyses Hydrolysis of terminal, non-reducing (1-&gt;4)-linked alpha-D-glucose residues with release of alpha-D-glucose.. Its function is as follows. Essential for the degradation of glycogen to glucose in lysosomes. Has both alpha-1,4 and alpha-1,6-glucosidase activity. The polypeptide is Lysosomal acid alpha-glucosidase (Tetrahymena pyriformis).